The primary structure comprises 245 residues: 3-deoxy-manno-octulosonate cytidylyltransferase (245 aa).

It belongs to the KdsB family.

Its subcellular location is the cytoplasm. It catalyses the reaction 3-deoxy-alpha-D-manno-oct-2-ulosonate + CTP = CMP-3-deoxy-beta-D-manno-octulosonate + diphosphate. Its pathway is nucleotide-sugar biosynthesis; CMP-3-deoxy-D-manno-octulosonate biosynthesis; CMP-3-deoxy-D-manno-octulosonate from 3-deoxy-D-manno-octulosonate and CTP: step 1/1. It participates in bacterial outer membrane biogenesis; lipopolysaccharide biosynthesis. Activates KDO (a required 8-carbon sugar) for incorporation into bacterial lipopolysaccharide in Gram-negative bacteria. The polypeptide is 3-deoxy-manno-octulosonate cytidylyltransferase (Fusobacterium nucleatum subsp. nucleatum (strain ATCC 25586 / DSM 15643 / BCRC 10681 / CIP 101130 / JCM 8532 / KCTC 2640 / LMG 13131 / VPI 4355)).